Reading from the N-terminus, the 509-residue chain is Maturase K (509 aa).

The protein belongs to the intron maturase 2 family. MatK subfamily.

The protein localises to the plastid. Its subcellular location is the chloroplast. In terms of biological role, usually encoded in the trnK tRNA gene intron. Probably assists in splicing its own and other chloroplast group II introns. This is Maturase K from Eucommia ulmoides (Hardy rubber tree).